A 335-amino-acid chain; its full sequence is Ketol-acid reductoisomerase (NADP(+)) (335 aa).

Residues Val-2–Thr-182 enclose the KARI N-terminal Rossmann domain. NADP(+)-binding positions include Tyr-25–Gln-28, Arg-48, Ser-51, and Asp-83–Gln-86. His-108 is a catalytic residue. Residue Gly-134 participates in NADP(+) binding. A KARI C-terminal knotted domain is found at Thr-183–Leu-328. Residues Asp-191, Glu-195, Glu-227, and Glu-231 each contribute to the Mg(2+) site. Ser-252 is a binding site for substrate.

It belongs to the ketol-acid reductoisomerase family. Mg(2+) is required as a cofactor.

The enzyme catalyses (2R)-2,3-dihydroxy-3-methylbutanoate + NADP(+) = (2S)-2-acetolactate + NADPH + H(+). It catalyses the reaction (2R,3R)-2,3-dihydroxy-3-methylpentanoate + NADP(+) = (S)-2-ethyl-2-hydroxy-3-oxobutanoate + NADPH + H(+). It participates in amino-acid biosynthesis; L-isoleucine biosynthesis; L-isoleucine from 2-oxobutanoate: step 2/4. Its pathway is amino-acid biosynthesis; L-valine biosynthesis; L-valine from pyruvate: step 2/4. Functionally, involved in the biosynthesis of branched-chain amino acids (BCAA). Catalyzes an alkyl-migration followed by a ketol-acid reduction of (S)-2-acetolactate (S2AL) to yield (R)-2,3-dihydroxy-isovalerate. In the isomerase reaction, S2AL is rearranged via a Mg-dependent methyl migration to produce 3-hydroxy-3-methyl-2-ketobutyrate (HMKB). In the reductase reaction, this 2-ketoacid undergoes a metal-dependent reduction by NADPH to yield (R)-2,3-dihydroxy-isovalerate. The chain is Ketol-acid reductoisomerase (NADP(+)) from Methanococcoides burtonii (strain DSM 6242 / NBRC 107633 / OCM 468 / ACE-M).